Here is a 173-residue protein sequence, read N- to C-terminus: UPF0398 protein SMU_470 (173 aa).

Belongs to the UPF0398 family.

The sequence is that of UPF0398 protein SMU_470 from Streptococcus mutans serotype c (strain ATCC 700610 / UA159).